Consider the following 599-residue polypeptide: Microtubule-associated protein 70-2 (599 aa).

The segment at 1–30 is disordered; it reads MADGGGGEEGSASALRGSARRRGAVQPAGL. Residues 43–349 adopt a coiled-coil conformation; that stretch reads DPVKVELNRL…ARSEAQLKEK (307 aa). The segment at 227 to 460 is required for targeting to microtubules; sequence ILDRLHRQKV…HLLNRSTDAV (234 aa). Disordered stretches follow at residues 357-453 and 557-599; these read LEDG…PHLL and AMRL…RNLQ. A compositionally biased stretch (low complexity) spans 404–420; the sequence is RRSPSFNSRSSLSTSSS. A coiled-coil region spans residues 533–570; it reads LTKAMEVEAKKMRREVAAMEKEVAAMRLDKDQENKAKR. Positions 557 to 568 are enriched in basic and acidic residues; sequence AMRLDKDQENKA.

This sequence belongs to the MAP70 family.

It localises to the cytoplasm. The protein localises to the cytoskeleton. Functionally, plant-specific protein that interact with microtubules. This chain is Microtubule-associated protein 70-2 (MAP70.2), found in Oryza sativa subsp. japonica (Rice).